Reading from the N-terminus, the 114-residue chain is MKTIIVFLSLLVLATKFGDANEGVNQEQMKEVIQNEFREDFLNEMAPMSLLQQLEAIESTLLEKEADRNSRQKRCLGENVPCGDFPCCGKLACEKTFGYGWWYKSPFCVKPSKG.

The signal sequence occupies residues 1-20 (MKTIIVFLSLLVLATKFGDA). Positions 21–74 (NEGVNQEQMKEVIQNEFREDFLNEMAPMSLLQQLEAIESTLLEKEADRNSRQKR) are excised as a propeptide. 3 disulfide bridges follow: Cys-75/Cys-88, Cys-82/Cys-93, and Cys-87/Cys-108.

This sequence belongs to the neurotoxin 14 (magi-1) family. 03 (ICK-30-40) subfamily. In terms of tissue distribution, expressed by the venom gland.

It is found in the secreted. Ion channel inhibitor. The protein is U17-barytoxin-Tl1d of Trittame loki (Brush-footed trapdoor spider).